The sequence spans 159 residues: Transcriptional repressor NrdR (159 aa).

A zinc finger lies at 3 to 34; sequence CPFCRHEDTQVVDSRVSEDGAAIRRRRRCSAC. The ATP-cone domain maps to 49–139; sequence PAVVKKDGSR…VYRRFEDVSE (91 aa).

The protein belongs to the NrdR family. It depends on Zn(2+) as a cofactor.

Its function is as follows. Negatively regulates transcription of bacterial ribonucleotide reductase nrd genes and operons by binding to NrdR-boxes. This chain is Transcriptional repressor NrdR, found in Burkholderia vietnamiensis (strain G4 / LMG 22486) (Burkholderia cepacia (strain R1808)).